A 697-amino-acid chain; its full sequence is Probable potassium transporter 4 (697 aa).

At 1–29 (MSSSHTVTVSMDVEAGQKNKDKKGISQDL) the chain is on the cytoplasmic side. A helical transmembrane segment spans residues 30–50 (ILAYKTLGVVFGGLVTSPLYV). Over 51 to 66 (YPSMNLTNPTEEDYLG) the chain is Extracellular. Asn-55 is a glycosylation site (N-linked (GlcNAc...) asparagine). Residues 67 to 87 (IYSIMFWTLTLIGVVKYICIA) traverse the membrane as a helical segment. The Cytoplasmic segment spans residues 88-152 (LNADDHGEGG…FIESSIIARR (65 aa)). A helical membrane pass occupies residues 153–173 (LLLLTAILGMCMLIGDGILTP). The Extracellular segment spans residues 174-189 (AISVLSAIDGLRGPFP). A helical transmembrane segment spans residues 190-210 (SVSKPAVEGLSAAILVGLFLL). Topologically, residues 211–217 (QKYGTSK) are cytoplasmic. A helical transmembrane segment spans residues 218-238 (VSFMFSPIMAAWTFATPVIGV). Residues 239–271 (YSIWRYYPGIFKAMSPHYIVRFFMTNQTRGWQL) are Extracellular-facing. Asn-264 carries an N-linked (GlcNAc...) asparagine glycan. A helical transmembrane segment spans residues 272-292 (LGGTVLCITGAEAMFADLGHF). Residues 293–300 (SKRSIQIA) are Cytoplasmic-facing. The helical transmembrane segment at 301 to 321 (FMSSIYPSLVLTYAGQTAYLI) threads the bilayer. At 322 to 338 (NNVDDFSDGFYKFVPRP) the chain is on the extracellular side. The helical transmembrane segment at 339 to 359 (VYWPMFIIATLAAIVASQSLI) threads the bilayer. The Cytoplasmic segment spans residues 360 to 390 (SATFSVIKQSVVLDYFPRVKVVHTSKDKEGE). Residues 391–411 (VYSPETNYMLMLLCVGVILGF) form a helical membrane-spanning segment. Over 412-422 (GDGKDIGNAFG) the chain is Extracellular. Residues 423 to 443 (VVVILVMLITTILLTLVMLII) traverse the membrane as a helical segment. Residues 444–447 (WGTH) are Cytoplasmic-facing. The helical transmembrane segment at 448–468 (VVLVALYLVPFLLLEATYVSA) threads the bilayer. The Extracellular portion of the chain corresponds to 469–475 (VCTKILR). The chain crosses the membrane as a helical span at residues 476–496 (GGWVPFAVSVALAAVMFGWYY). Residues 497 to 697 (GRQRKTEYEA…RVEIGMLYKA (201 aa)) lie on the Cytoplasmic side of the membrane.

The protein belongs to the HAK/KUP transporter (TC 2.A.72.3) family.

The protein resides in the membrane. Functionally, high-affinity potassium transporter. The sequence is that of Probable potassium transporter 4 (HAK4) from Oryza sativa subsp. japonica (Rice).